Consider the following 170-residue polypeptide: Co-chaperone protein HscB homolog (170 aa).

Positions 5–79 constitute a J domain; sequence DHFSLFGLPA…RARYLCEQAG (75 aa).

This sequence belongs to the HscB family. In terms of assembly, interacts with HscA and stimulates its ATPase activity.

Co-chaperone involved in the maturation of iron-sulfur cluster-containing proteins. Seems to help targeting proteins to be folded toward HscA. This Bordetella petrii (strain ATCC BAA-461 / DSM 12804 / CCUG 43448) protein is Co-chaperone protein HscB homolog.